The primary structure comprises 80 residues: ATP synthase subunit c (80 aa).

The next 2 helical transmembrane spans lie at 11–31 and 54–74; these read IAAT…IGIL and FIVM…GLYI.

This sequence belongs to the ATPase C chain family. F-type ATPases have 2 components, F(1) - the catalytic core - and F(0) - the membrane proton channel. F(1) has five subunits: alpha(3), beta(3), gamma(1), delta(1), epsilon(1). F(0) has three main subunits: a(1), b(2) and c(10-14). The alpha and beta chains form an alternating ring which encloses part of the gamma chain. F(1) is attached to F(0) by a central stalk formed by the gamma and epsilon chains, while a peripheral stalk is formed by the delta and b chains.

The protein resides in the cell membrane. In terms of biological role, f(1)F(0) ATP synthase produces ATP from ADP in the presence of a proton or sodium gradient. F-type ATPases consist of two structural domains, F(1) containing the extramembraneous catalytic core and F(0) containing the membrane proton channel, linked together by a central stalk and a peripheral stalk. During catalysis, ATP synthesis in the catalytic domain of F(1) is coupled via a rotary mechanism of the central stalk subunits to proton translocation. Its function is as follows. Key component of the F(0) channel; it plays a direct role in translocation across the membrane. A homomeric c-ring of between 10-14 subunits forms the central stalk rotor element with the F(1) delta and epsilon subunits. In Baumannia cicadellinicola subsp. Homalodisca coagulata, this protein is ATP synthase subunit c.